The sequence spans 654 residues: Translation factor GUF1, mitochondrial (654 aa).

The tr-type G domain occupies 57–237 (ENYRNFSIVA…SVIKNIPSPV (181 aa)). Residues 66 to 73 (AHVDHGKS), 130 to 134 (DTPGH), and 184 to 187 (NKID) each bind GTP.

This sequence belongs to the TRAFAC class translation factor GTPase superfamily. Classic translation factor GTPase family. LepA subfamily.

The protein localises to the mitochondrion inner membrane. It carries out the reaction GTP + H2O = GDP + phosphate + H(+). Functionally, promotes mitochondrial protein synthesis. May act as a fidelity factor of the translation reaction, by catalyzing a one-codon backward translocation of tRNAs on improperly translocated ribosomes. Binds to mitochondrial ribosomes in a GTP-dependent manner. The protein is Translation factor GUF1, mitochondrial of Candida albicans (strain WO-1) (Yeast).